Consider the following 120-residue polypeptide: UPF0145 protein Bcenmc03_5217 (120 aa).

Belongs to the UPF0145 family.

This chain is UPF0145 protein Bcenmc03_5217, found in Burkholderia orbicola (strain MC0-3).